Reading from the N-terminus, the 427-residue chain is Fc receptor-like B (427 aa).

An N-terminal signal peptide occupies residues 1–17; that stretch reads MWMLAALLLLVPRSGKA. Ig-like C2-type domains are found at residues 23–101 and 103–189; these read PVLT…LSVS and DWLI…VAVT. 2 disulfides stabilise this stretch: Cys-44/Cys-85 and Cys-124/Cys-168. An N-linked (GlcNAc...) asparagine glycan is attached at Asn-152. The span at 401–418 shows a compositional bias: polar residues; it reads TPETPNSHVTVNPATPET. The interval 401-427 is disordered; sequence TPETPNSHVTVNPATPETTVMEGRVDS.

Expressed at low levels. Expressed in B-lymphocytes. Detected in spleen, lymph node, kidney, lung and brain.

Its subcellular location is the cytoplasm. It is found in the endoplasmic reticulum. In Mus musculus (Mouse), this protein is Fc receptor-like B (Fcrlb).